Reading from the N-terminus, the 66-residue chain is Large ribosomal subunit protein uL29 (66 aa).

It belongs to the universal ribosomal protein uL29 family. Part of the 50S ribosomal subunit.

In Thermococcus kodakarensis (strain ATCC BAA-918 / JCM 12380 / KOD1) (Pyrococcus kodakaraensis (strain KOD1)), this protein is Large ribosomal subunit protein uL29.